Consider the following 29-residue polypeptide: Alpha-amylase inhibitor 2 (29 aa).

It belongs to the protease inhibitor I6 (cereal trypsin/alpha-amylase inhibitor) family.

It localises to the secreted. In terms of biological role, alpha-amylase inhibitor. The protein is Alpha-amylase inhibitor 2 of Saussurea costus (Costus).